The chain runs to 364 residues: Ribosomal RNA large subunit methyltransferase M (364 aa).

S-adenosyl-L-methionine contacts are provided by residues S187, 220–223 (CPGG), D239, D259, and D276. Residue K305 is the Proton acceptor of the active site.

It belongs to the class I-like SAM-binding methyltransferase superfamily. RNA methyltransferase RlmE family. RlmM subfamily. In terms of assembly, monomer.

The protein resides in the cytoplasm. The catalysed reaction is cytidine(2498) in 23S rRNA + S-adenosyl-L-methionine = 2'-O-methylcytidine(2498) in 23S rRNA + S-adenosyl-L-homocysteine + H(+). Its function is as follows. Catalyzes the 2'-O-methylation at nucleotide C2498 in 23S rRNA. The polypeptide is Ribosomal RNA large subunit methyltransferase M (Aeromonas hydrophila subsp. hydrophila (strain ATCC 7966 / DSM 30187 / BCRC 13018 / CCUG 14551 / JCM 1027 / KCTC 2358 / NCIMB 9240 / NCTC 8049)).